A 189-amino-acid chain; its full sequence is Ion-translocating oxidoreductase complex subunit B (189 aa).

A hydrophobic region spans residues 1–26 (MSQVIIAIILLGLLALAFGALLGYAA). The 4Fe-4S domain occupies 32-90 (EGDPIIDQAEALLPQTQCGQCGYPGCRPYAEAIANGEKINKCPPGGTATMEKLAELMGV). [4Fe-4S] cluster is bound by residues Cys-49, Cys-52, Cys-57, Cys-73, Cys-114, Cys-117, Cys-120, Cys-124, Cys-144, Cys-147, Cys-150, and Cys-154. 2 4Fe-4S ferredoxin-type domains span residues 105 to 134 (KVAFIREAECIGCTKCIQACPVDAILGTGK) and 135 to 164 (QMHTVITDYCTGCDLCVEPCPVDCIDMIPV).

Belongs to the 4Fe4S bacterial-type ferredoxin family. RnfB subfamily. As to quaternary structure, the complex is composed of six subunits: RnfA, RnfB, RnfC, RnfD, RnfE and RnfG. [4Fe-4S] cluster serves as cofactor.

It localises to the cell inner membrane. Functionally, part of a membrane-bound complex that couples electron transfer with translocation of ions across the membrane. This is Ion-translocating oxidoreductase complex subunit B from Shewanella loihica (strain ATCC BAA-1088 / PV-4).